The following is a 546-amino-acid chain: CTP synthase (546 aa).

The segment at 1 to 266 is amidoligase domain; it reads MTTRYIFVTG…DDLVVKRFGL (266 aa). Ser14 is a CTP binding site. Position 14 (Ser14) interacts with UTP. ATP-binding positions include 15–20 and Asp72; that span reads SLGKGI. Residues Asp72 and Glu140 each coordinate Mg(2+). Residues 147–149, 187–192, and Lys223 contribute to the CTP site; these read DIE and KTKPTQ. UTP-binding positions include 187–192 and Lys223; that span reads KTKPTQ. 239-241 contributes to the ATP binding site; sequence KDV. The Glutamine amidotransferase type-1 domain occupies 291-542; it reads VIGMVGKYIE…VAAASAHQKR (252 aa). Residue Gly352 coordinates L-glutamine. Residue Cys379 is the Nucleophile; for glutamine hydrolysis of the active site. Residues 380–383, Glu403, and Arg470 each bind L-glutamine; that span reads LGMQ. Active-site residues include His515 and Glu517.

This sequence belongs to the CTP synthase family. In terms of assembly, homotetramer.

It carries out the reaction UTP + L-glutamine + ATP + H2O = CTP + L-glutamate + ADP + phosphate + 2 H(+). It catalyses the reaction L-glutamine + H2O = L-glutamate + NH4(+). The enzyme catalyses UTP + NH4(+) + ATP = CTP + ADP + phosphate + 2 H(+). It functions in the pathway pyrimidine metabolism; CTP biosynthesis via de novo pathway; CTP from UDP: step 2/2. Its activity is regulated as follows. Allosterically activated by GTP, when glutamine is the substrate; GTP has no effect on the reaction when ammonia is the substrate. The allosteric effector GTP functions by stabilizing the protein conformation that binds the tetrahedral intermediate(s) formed during glutamine hydrolysis. Inhibited by the product CTP, via allosteric rather than competitive inhibition. Its function is as follows. Catalyzes the ATP-dependent amination of UTP to CTP with either L-glutamine or ammonia as the source of nitrogen. Regulates intracellular CTP levels through interactions with the four ribonucleotide triphosphates. The polypeptide is CTP synthase (Shewanella sp. (strain ANA-3)).